A 2311-amino-acid polypeptide reads, in one-letter code: Protein Ycf2 (2311 aa).

Position 1652–1659 (1652–1659) interacts with ATP; that stretch reads GSIGTGRS.

It belongs to the Ycf2 family.

The protein localises to the plastid. Its subcellular location is the chloroplast stroma. Probable ATPase of unknown function. Its presence in a non-photosynthetic plant (Epifagus virginiana) and experiments in tobacco indicate that it has an essential function which is probably not related to photosynthesis. The chain is Protein Ycf2 from Lemna minor (Common duckweed).